The sequence spans 231 residues: Biosynthetic peptidoglycan transglycosylase (231 aa).

The helical transmembrane segment at 10-30 threads the bilayer; the sequence is LLLLGLIGLFLVWQLWLLGWV.

It belongs to the glycosyltransferase 51 family.

Its subcellular location is the cell inner membrane. The enzyme catalyses [GlcNAc-(1-&gt;4)-Mur2Ac(oyl-L-Ala-gamma-D-Glu-L-Lys-D-Ala-D-Ala)](n)-di-trans,octa-cis-undecaprenyl diphosphate + beta-D-GlcNAc-(1-&gt;4)-Mur2Ac(oyl-L-Ala-gamma-D-Glu-L-Lys-D-Ala-D-Ala)-di-trans,octa-cis-undecaprenyl diphosphate = [GlcNAc-(1-&gt;4)-Mur2Ac(oyl-L-Ala-gamma-D-Glu-L-Lys-D-Ala-D-Ala)](n+1)-di-trans,octa-cis-undecaprenyl diphosphate + di-trans,octa-cis-undecaprenyl diphosphate + H(+). It participates in cell wall biogenesis; peptidoglycan biosynthesis. Peptidoglycan polymerase that catalyzes glycan chain elongation from lipid-linked precursors. This chain is Biosynthetic peptidoglycan transglycosylase, found in Dechloromonas aromatica (strain RCB).